A 1591-amino-acid chain; its full sequence is Dicer-like protein 1 (1591 aa).

Composition is skewed to basic and acidic residues over residues 1–20 (MEVH…RYDD) and 41–52 (SKPRKISERKRA). The interval 1–52 (MEVHDGLKSPDKAAKSRYDDDRIDQDSEDEAVRLVANPDPSKPRKISERKRA) is disordered. In terms of domain architecture, Helicase ATP-binding spans 115–298 (LFERAKQKNT…SYERATHELE (184 aa)). 128 to 135 (LDTGTGKT) contacts ATP. Residues 242-245 (DEAH) carry the DEAH box motif. The Helicase C-terminal domain maps to 439 to 607 (KLIEILAECF…CLSLPKDRIM (169 aa)). In terms of domain architecture, Dicer dsRNA-binding fold spans 639–729 (SLVVLAEFVA…KSTLAKVLPA (91 aa)). Residues 888 to 1012 (TTTDRVPYNF…LVLETLLISQ (125 aa)) enclose the PAZ domain. RNase III domains are found at residues 1050 to 1190 (IDIA…LTAQ) and 1243 to 1406 (CSQI…VDTG). Positions 1283, 1392, and 1395 each coordinate Mg(2+). The DRBM domain occupies 1440 to 1514 (THITSIITTQ…AKQAVAIYED (75 aa)). Positions 1452, 1485, 1526, and 1528 each coordinate Zn(2+).

It belongs to the helicase family. Dicer subfamily. It depends on Mg(2+) as a cofactor. Requires Mn(2+) as cofactor.

Dicer-like endonuclease which seems not to be involved in cleaving double-stranded RNA in the RNA interference (RNAi) pathway, contrary to its DCL2 counterpart. This Pyricularia oryzae (strain 70-15 / ATCC MYA-4617 / FGSC 8958) (Rice blast fungus) protein is Dicer-like protein 1 (DCL1).